We begin with the raw amino-acid sequence, 367 residues long: Septin-1 (367 aa).

In terms of domain architecture, Septin-type G spans 22-296 (KGFDFTLMVA…EGYRARCLQS (275 aa)). The G1 motif stretch occupies residues 32-39 (GESGLGKS). Residues 32-39 (GESGLGKS), Thr-66, Gly-92, and 171-179 (KADALMPKE) contribute to the GTP site. The interval 89-92 (DTPG) is G3 motif. The G4 motif stretch occupies residues 170–173 (GKAD). Ser-206 is subject to Phosphoserine. Residues Gly-229 and Arg-245 each contribute to the GTP site. Ser-248 carries the post-translational modification Phosphoserine; by AURKB. Phosphothreonine is present on Thr-251. Phosphoserine; by AURKB is present on residues Ser-307 and Ser-315.

The protein belongs to the TRAFAC class TrmE-Era-EngA-EngB-Septin-like GTPase superfamily. Septin GTPase family. Septins polymerize into heterooligomeric protein complexes that form filaments, and can associate with cellular membranes, actin filaments and microtubules. GTPase activity is required for filament formation. Interacts with AURKB.

It is found in the cytoplasm. The protein resides in the cytoskeleton. Its subcellular location is the microtubule organizing center. It localises to the centrosome. The protein localises to the midbody. In terms of biological role, filament-forming cytoskeletal GTPase. May play a role in cytokinesis (Potential). The sequence is that of Septin-1 from Bos taurus (Bovine).